Here is a 286-residue protein sequence, read N- to C-terminus: MPLVSMKEMLIDAKENGYAVGQYNLNNLEFTQAILEASQEENAPVILGVSEGAARYMSGFYTVVKMVEGLMHDLNITIPVAIHLDHGSSFEKCKEAIDAGFTSVMIDASHSPFEENVEITSKVVEYAHDRGVSVEAELGTVGGQEDDVVADGVIYADPKECQELVEKTGIDTLAPALGSVHGPYKGEPKLGFKEMEEIGASTGLPLVLHGGTGIPTKDIQKAIPYGTAKINVNTENQIASAKAVREVLNNDKDVYDPRKYLGPAREAIKETVKGKIREFGTSNRAK.

Ser50 contacts D-glyceraldehyde 3-phosphate. Asp85 functions as the Proton donor in the catalytic mechanism. His86, Asp107, Glu137, and His181 together coordinate Zn(2+). Gly182 is a dihydroxyacetone phosphate binding site. A Zn(2+)-binding site is contributed by His209. Dihydroxyacetone phosphate-binding positions include 210–212 (GGT) and 231–234 (NVNT).

It belongs to the class II fructose-bisphosphate aldolase family. It depends on Zn(2+) as a cofactor.

It catalyses the reaction beta-D-fructose 1,6-bisphosphate = D-glyceraldehyde 3-phosphate + dihydroxyacetone phosphate. The protein operates within carbohydrate degradation; glycolysis; D-glyceraldehyde 3-phosphate and glycerone phosphate from D-glucose: step 4/4. In terms of biological role, catalyzes the aldol condensation of dihydroxyacetone phosphate (DHAP or glycerone-phosphate) with glyceraldehyde 3-phosphate (G3P) to form fructose 1,6-bisphosphate (FBP) in gluconeogenesis and the reverse reaction in glycolysis. This is Fructose-bisphosphate aldolase (fba) from Staphylococcus epidermidis (strain ATCC 35984 / DSM 28319 / BCRC 17069 / CCUG 31568 / BM 3577 / RP62A).